The primary structure comprises 178 residues: Adenine phosphoribosyltransferase (178 aa).

The protein belongs to the purine/pyrimidine phosphoribosyltransferase family. Homodimer.

It is found in the cytoplasm. The enzyme catalyses AMP + diphosphate = 5-phospho-alpha-D-ribose 1-diphosphate + adenine. It participates in purine metabolism; AMP biosynthesis via salvage pathway; AMP from adenine: step 1/1. Its function is as follows. Catalyzes a salvage reaction resulting in the formation of AMP, that is energically less costly than de novo synthesis. This chain is Adenine phosphoribosyltransferase, found in Cereibacter sphaeroides (strain KD131 / KCTC 12085) (Rhodobacter sphaeroides).